We begin with the raw amino-acid sequence, 370 residues long: UPF0284 protein PCC7424_2681 (370 aa).

It belongs to the UPF0284 family.

This Gloeothece citriformis (strain PCC 7424) (Cyanothece sp. (strain PCC 7424)) protein is UPF0284 protein PCC7424_2681.